The primary structure comprises 239 residues: Ribosomal RNA small subunit methyltransferase G (239 aa).

S-adenosyl-L-methionine-binding positions include Gly-78, Phe-83, Ala-129–Glu-130, and Arg-148.

This sequence belongs to the methyltransferase superfamily. RNA methyltransferase RsmG family.

It is found in the cytoplasm. In terms of biological role, specifically methylates the N7 position of a guanine in 16S rRNA. This is Ribosomal RNA small subunit methyltransferase G from Clostridium botulinum (strain 657 / Type Ba4).